The sequence spans 155 residues: Small ribosomal subunit protein uS7c (155 aa).

It belongs to the universal ribosomal protein uS7 family. As to quaternary structure, part of the 30S ribosomal subunit.

Its subcellular location is the plastid. The protein localises to the chloroplast. One of the primary rRNA binding proteins, it binds directly to 16S rRNA where it nucleates assembly of the head domain of the 30S subunit. The protein is Small ribosomal subunit protein uS7c (rps7) of Saururus cernuus (Lizard's tail).